A 100-amino-acid polypeptide reads, in one-letter code: Urease subunit gamma (100 aa).

Belongs to the urease gamma subunit family. Heterotrimer of UreA (gamma), UreB (beta) and UreC (alpha) subunits. Three heterotrimers associate to form the active enzyme. The apoenzyme interacts with an accessory complex composed of UreD, UreF and UreG, which is required for the assembly of the nickel containing metallocenter of UreC. The UreE protein may also play a direct role as a metallochaperone in nickel transfer to the urease apoprotein.

The protein resides in the cytoplasm. It catalyses the reaction urea + 2 H2O + H(+) = hydrogencarbonate + 2 NH4(+). The protein operates within nitrogen metabolism; urea degradation; CO(2) and NH(3) from urea (urease route): step 1/1. Its activity is regulated as follows. The apoenzyme can be activated in vitro in the presence of nickel ions and carbon dioxide, which promotes carbamylation of 'Lys-217' of the UreC (alpha) subunit. The chain is Urease subunit gamma from Klebsiella aerogenes (Enterobacter aerogenes).